The sequence spans 125 residues: uncharacterized protein (125 aa).

The interval 50-73 is disordered; that stretch reads QTSDFSDESSRSDSSSVTNENEVS.

This is an uncharacterized protein from Microplitis demolitor (Parasitoid wasp).